We begin with the raw amino-acid sequence, 72 residues long: UPF0154 protein BPUM_1692 (72 aa).

Residues tryptophan 4–isoleucine 24 form a helical membrane-spanning segment.

This sequence belongs to the UPF0154 family.

The protein resides in the cell membrane. The chain is UPF0154 protein BPUM_1692 from Bacillus pumilus (strain SAFR-032).